Reading from the N-terminus, the 393-residue chain is Protein TsgA (393 aa).

12 helical membrane-spanning segments follow: residues 11 to 31, 51 to 71, 78 to 98, 101 to 121, 134 to 154, 162 to 182, 206 to 226, 245 to 265, 273 to 293, 298 to 318, 332 to 352, and 361 to 381; these read WISF…GMVM, FLNA…EIVP, FGFI…SLAL, AAMF…TFLI, LLFT…VAAF, WYWV…LTFG, IGVL…LGFI, ALVS…SFIL, ILTV…TGTQ, WFIL…ITLG, FILT…GPIV, and LLTA…LGFV.

It belongs to the major facilitator superfamily. TsgA family.

It localises to the cell inner membrane. The protein is Protein TsgA of Salmonella arizonae (strain ATCC BAA-731 / CDC346-86 / RSK2980).